The following is a 380-amino-acid chain: Lipid-A-disaccharide synthase (380 aa).

It belongs to the LpxB family.

The catalysed reaction is a lipid X + a UDP-2-N,3-O-bis[(3R)-3-hydroxyacyl]-alpha-D-glucosamine = a lipid A disaccharide + UDP + H(+). It functions in the pathway bacterial outer membrane biogenesis; LPS lipid A biosynthesis. In terms of biological role, condensation of UDP-2,3-diacylglucosamine and 2,3-diacylglucosamine-1-phosphate to form lipid A disaccharide, a precursor of lipid A, a phosphorylated glycolipid that anchors the lipopolysaccharide to the outer membrane of the cell. The polypeptide is Lipid-A-disaccharide synthase (Pseudomonas syringae pv. tomato (strain ATCC BAA-871 / DC3000)).